A 503-amino-acid polypeptide reads, in one-letter code: Na(+)-translocating NADH-quinone reductase subunit B (503 aa).

The next 4 membrane-spanning stretches (helical) occupy residues 55–75, 120–142, 161–181, and 186–206; these read MILV…NSGV, IFLP…FAVI, TLPP…GVVV, and FGGT…FLFF. FMN phosphoryl threonine is present on threonine 248. Helical transmembrane passes span 361-381, 387-407, 417-437, 452-472, and 475-495; these read TSTF…IASW, FGIG…LIVG, FFIP…LVFM, WIYG…NPAY, and GVML…YFAV.

It belongs to the NqrB/RnfD family. In terms of assembly, composed of six subunits; NqrA, NqrB, NqrC, NqrD, NqrE and NqrF. The cofactor is FMN.

It localises to the cell inner membrane. It carries out the reaction a ubiquinone + n Na(+)(in) + NADH + H(+) = a ubiquinol + n Na(+)(out) + NAD(+). Its function is as follows. NQR complex catalyzes the reduction of ubiquinone-1 to ubiquinol by two successive reactions, coupled with the transport of Na(+) ions from the cytoplasm to the periplasm. NqrA to NqrE are probably involved in the second step, the conversion of ubisemiquinone to ubiquinol. The sequence is that of Na(+)-translocating NADH-quinone reductase subunit B from Chlamydia felis (strain Fe/C-56) (Chlamydophila felis).